Here is a 424-residue protein sequence, read N- to C-terminus: Ankyrin repeat domain-containing protein 61 (424 aa).

ANK repeat units follow at residues 80-109 (LSFL…DPEA), 113-169 (QGFT…ARVD), 172-201 (HRHC…QVNA), 205-234 (SSMT…SVNC), 239-278 (TGNT…QVNA), 282-311 (DGQA…NVNI), and 315-348 (NGES…PLRL).

This is Ankyrin repeat domain-containing protein 61 (ANKRD61) from Bos taurus (Bovine).